The chain runs to 459 residues: ATP-dependent protease ATPase subunit HslU (459 aa).

Residues valine 18, 60–65 (GVGKTE), aspartate 272, glutamate 337, and arginine 409 contribute to the ATP site.

The protein belongs to the ClpX chaperone family. HslU subfamily. In terms of assembly, a double ring-shaped homohexamer of HslV is capped on each side by a ring-shaped HslU homohexamer. The assembly of the HslU/HslV complex is dependent on binding of ATP.

It localises to the cytoplasm. Its function is as follows. ATPase subunit of a proteasome-like degradation complex; this subunit has chaperone activity. The binding of ATP and its subsequent hydrolysis by HslU are essential for unfolding of protein substrates subsequently hydrolyzed by HslV. HslU recognizes the N-terminal part of its protein substrates and unfolds these before they are guided to HslV for hydrolysis. In Thermoanaerobacter pseudethanolicus (strain ATCC 33223 / 39E) (Clostridium thermohydrosulfuricum), this protein is ATP-dependent protease ATPase subunit HslU.